The primary structure comprises 350 residues: Transmembrane protein 185B (350 aa).

Transmembrane regions (helical) follow at residues 16–36 (LIYA…DGII), 41–61 (WAVF…ASVG), 81–101 (FKAM…EILV), 111–131 (FWLL…AACV), 168–188 (WLVV…VVLY), 211–231 (VTMA…EVLL), and 240–260 (TFSY…LMAT).

Belongs to the TMEM185 family.

It localises to the membrane. This Mus musculus (Mouse) protein is Transmembrane protein 185B (Tmem185b).